Here is a 297-residue protein sequence, read N- to C-terminus: Transcription factor PCF8 (297 aa).

The disordered stretch occupies residues 1–22 (MEEVVGGGKERKRPRGALVGVG). The TCP domain maps to 46–104 (GKDRHSKVVTSRGLRDRRVRLSVPTAIAFYDIQDRLGVDQPSKAIEWLIRAAAAAIDAL). Disordered stretches follow at residues 116-136 (AASS…SETS) and 273-297 (AAPA…ERKT). Residues 282–297 (GERRLQLWDFKEERKT) show a composition bias toward basic and acidic residues.

In terms of assembly, forms homodimers and heterodimers.

It is found in the nucleus. Transcription activator. Binds the promoter core sequence 5'-GGNCC-3'. The protein is Transcription factor PCF8 (PCF8) of Oryza sativa subsp. indica (Rice).